Consider the following 129-residue polypeptide: MSKKKTEELVDALSELTVLEMAELKTLLEDKWGVKAAAPVAVAAPAAGAPAAAVVESTDFQVTLTEAPADKKIGIIKVVREITGLGLKEAKDLVEAAPKELKPTAPKAEAEDIKKKIETAGGKVTLKGL.

It belongs to the bacterial ribosomal protein bL12 family. Homodimer. Part of the ribosomal stalk of the 50S ribosomal subunit. Forms a multimeric L10(L12)X complex, where L10 forms an elongated spine to which 2 to 4 L12 dimers bind in a sequential fashion. Binds GTP-bound translation factors.

Forms part of the ribosomal stalk which helps the ribosome interact with GTP-bound translation factors. Is thus essential for accurate translation. In Protochlamydia amoebophila (strain UWE25), this protein is Large ribosomal subunit protein bL12.